We begin with the raw amino-acid sequence, 189 residues long: Chitin synthase 1 (189 aa).

Belongs to the chitin synthase family.

It is found in the cell membrane. It carries out the reaction [(1-&gt;4)-N-acetyl-beta-D-glucosaminyl](n) + UDP-N-acetyl-alpha-D-glucosamine = [(1-&gt;4)-N-acetyl-beta-D-glucosaminyl](n+1) + UDP + H(+). Functionally, polymerizes chitin, a structural polymer of the cell wall and septum, by transferring the sugar moiety of UDP-GlcNAc to the non-reducing end of the growing chitin polymer. The sequence is that of Chitin synthase 1 (CHS1) from Exophiala exophialae (Black yeast-like fungus).